Consider the following 874-residue polypeptide: Alanine--tRNA ligase (874 aa).

Residues H563, H567, C665, and H669 each coordinate Zn(2+).

This sequence belongs to the class-II aminoacyl-tRNA synthetase family. It depends on Zn(2+) as a cofactor.

It localises to the cytoplasm. The enzyme catalyses tRNA(Ala) + L-alanine + ATP = L-alanyl-tRNA(Ala) + AMP + diphosphate. Functionally, catalyzes the attachment of alanine to tRNA(Ala) in a two-step reaction: alanine is first activated by ATP to form Ala-AMP and then transferred to the acceptor end of tRNA(Ala). Also edits incorrectly charged Ser-tRNA(Ala) and Gly-tRNA(Ala) via its editing domain. This Actinobacillus pleuropneumoniae serotype 7 (strain AP76) protein is Alanine--tRNA ligase.